Reading from the N-terminus, the 549-residue chain is Chaperonin GroEL (549 aa).

ATP contacts are provided by residues 30 to 33 (TLGP), Lys-51, 87 to 91 (DGTTT), Gly-415, 479 to 481 (NAA), and Asp-495.

Belongs to the chaperonin (HSP60) family. As to quaternary structure, forms a cylinder of 14 subunits composed of two heptameric rings stacked back-to-back. Interacts with the co-chaperonin GroES.

It is found in the cytoplasm. The catalysed reaction is ATP + H2O + a folded polypeptide = ADP + phosphate + an unfolded polypeptide.. In terms of biological role, together with its co-chaperonin GroES, plays an essential role in assisting protein folding. The GroEL-GroES system forms a nano-cage that allows encapsulation of the non-native substrate proteins and provides a physical environment optimized to promote and accelerate protein folding. The polypeptide is Chaperonin GroEL (Stenotrophomonas maltophilia (strain K279a)).